Consider the following 362-residue polypeptide: MTQRAYNFNAGPSALPQEVLEKAQQQLVDFRDSGMSIMEMSHRSAIFDEVHNEAIALLKKLYAIPENYEVLFLQGGASLQFTMVPMNFLSTDQKASYVLSGSWSEKAFKEAKFFGTPVEAASTKDNQYRNIPALADIQFDEDDAYVHITSNNTIYGTQWRDYPDTGNVPLVADMSSDILSKPIDIQKFGLIYAGAQKNLGPSGVTVVIIRKDLLEKANKSIPTMLKYTTHADSNSLYNTPPTFGIYMLGEVLKWVESNGGVTAVEKRNELKAKVIYDAIDNSNGFYKGHATPESRSLMNITFRVADEELEKQFLAEAKAAGFVGLNGHRSVGGCRASTYNAVPLEACEALRDFMVDFQQKHQ.

Position 43 (R43) interacts with L-glutamate. Pyridoxal 5'-phosphate is bound by residues 77–78, W103, T153, D173, and Q196; that span reads AS. K197 is subject to N6-(pyridoxal phosphate)lysine. Pyridoxal 5'-phosphate is bound at residue 238–239; it reads NT.

This sequence belongs to the class-V pyridoxal-phosphate-dependent aminotransferase family. SerC subfamily. Homodimer. Requires pyridoxal 5'-phosphate as cofactor.

It is found in the cytoplasm. The enzyme catalyses O-phospho-L-serine + 2-oxoglutarate = 3-phosphooxypyruvate + L-glutamate. It catalyses the reaction 4-(phosphooxy)-L-threonine + 2-oxoglutarate = (R)-3-hydroxy-2-oxo-4-phosphooxybutanoate + L-glutamate. It functions in the pathway amino-acid biosynthesis; L-serine biosynthesis; L-serine from 3-phospho-D-glycerate: step 2/3. Its function is as follows. Catalyzes the reversible conversion of 3-phosphohydroxypyruvate to phosphoserine and of 3-hydroxy-2-oxo-4-phosphonooxybutanoate to phosphohydroxythreonine. In Lysinibacillus sphaericus (strain C3-41), this protein is Phosphoserine aminotransferase.